Consider the following 211-residue polypeptide: Protein-L-isoaspartate O-methyltransferase (211 aa).

Ser-62 is a catalytic residue.

It belongs to the methyltransferase superfamily. L-isoaspartyl/D-aspartyl protein methyltransferase family.

The protein resides in the cytoplasm. It carries out the reaction [protein]-L-isoaspartate + S-adenosyl-L-methionine = [protein]-L-isoaspartate alpha-methyl ester + S-adenosyl-L-homocysteine. Functionally, catalyzes the methyl esterification of L-isoaspartyl residues in peptides and proteins that result from spontaneous decomposition of normal L-aspartyl and L-asparaginyl residues. It plays a role in the repair and/or degradation of damaged proteins. The protein is Protein-L-isoaspartate O-methyltransferase of Shewanella piezotolerans (strain WP3 / JCM 13877).